Reading from the N-terminus, the 348-residue chain is Heat-inducible transcription repressor HrcA (348 aa).

It belongs to the HrcA family.

In terms of biological role, negative regulator of class I heat shock genes (grpE-dnaK-dnaJ and groELS operons). Prevents heat-shock induction of these operons. In Thermodesulfovibrio yellowstonii (strain ATCC 51303 / DSM 11347 / YP87), this protein is Heat-inducible transcription repressor HrcA.